A 134-amino-acid chain; its full sequence is Ribonuclease VapC1 (134 aa).

The PINc domain occupies 3–132 (YMLDTNIIIY…RITDLQWQDW (130 aa)). Residues D6 and D99 each contribute to the Mg(2+) site.

The protein belongs to the PINc/VapC protein family. Mg(2+) is required as a cofactor.

Functionally, toxic component of a type II toxin-antitoxin (TA) system. Acts as an RNase, its toxic effect is neutralized by VapB1 antitoxin. In Haemophilus influenzae (strain ATCC 51907 / DSM 11121 / KW20 / Rd), this protein is Ribonuclease VapC1.